The chain runs to 279 residues: Protein NipSnap homolog 1 (279 aa).

It belongs to the NipSnap family.

The protein localises to the mitochondrion matrix. Functionally, protein involved in mitophagy. Accumulates on the mitochondria surface in response to mitochondrial depolarization and acts as a 'eat me' signal by recruiting proteins involved in selective autophagy. This Danio rerio (Zebrafish) protein is Protein NipSnap homolog 1.